Reading from the N-terminus, the 63-residue chain is uncharacterized protein (63 aa).

The segment covering 1–15 (MGRNHIHKNRDKNKQ) has biased composition (basic residues). A disordered region spans residues 1–63 (MGRNHIHKNR…ADNRAKKKSR (63 aa)). Over residues 30 to 44 (GVYEEYSTELADADD) the composition is skewed to acidic residues. Residues 45 to 57 (REAQERAKAADNR) show a composition bias toward basic and acidic residues.

This is an uncharacterized protein from Bacillus subtilis (strain 168).